A 208-amino-acid chain; its full sequence is Probable GTP-binding protein EngB (208 aa).

The region spanning 23–205 (LTSEMVILGR…RQTLLKYLLT (183 aa)) is the EngB-type G domain. Residues 31-38 (GRSNVGKS), 57-61 (GKTRL), 84-87 (DLPG), 154-157 (TKFD), and 182-184 (FNA) each bind GTP. Positions 38 and 59 each coordinate Mg(2+).

It belongs to the TRAFAC class TrmE-Era-EngA-EngB-Septin-like GTPase superfamily. EngB GTPase family. It depends on Mg(2+) as a cofactor.

Necessary for normal cell division and for the maintenance of normal septation. In Helicobacter pylori (strain G27), this protein is Probable GTP-binding protein EngB.